A 106-amino-acid chain; its full sequence is UPF0473 protein SSU98_0068 (106 aa).

Belongs to the UPF0473 family.

The chain is UPF0473 protein SSU98_0068 from Streptococcus suis (strain 98HAH33).